The following is a 607-amino-acid chain: Chaperone protein DnaK (607 aa).

Position 174 is a phosphothreonine; by autocatalysis (Thr-174). Over residues 579–592 (AQAQAQQQAGANAG) the composition is skewed to low complexity. Residues 579-607 (AQAQAQQQAGANAGSDKKDEDVAEAEVVD) form a disordered region.

It belongs to the heat shock protein 70 family.

Acts as a chaperone. This Fusobacterium nucleatum subsp. nucleatum (strain ATCC 25586 / DSM 15643 / BCRC 10681 / CIP 101130 / JCM 8532 / KCTC 2640 / LMG 13131 / VPI 4355) protein is Chaperone protein DnaK.